The primary structure comprises 461 residues: Protein ultraspiracle homolog (461 aa).

The interval 1 to 112 (MSSVAKKDKR…NHPLSGSKHL (112 aa)) is modulating. The interval 26-51 (PAPHQQQSMPSSQPSNFLQPLATPST) is disordered. Over residues 27-40 (APHQQQSMPSSQPS) the composition is skewed to low complexity. Over residues 41-51 (NFLQPLATPST) the composition is skewed to polar residues. 2 consecutive NR C4-type zinc fingers follow at residues 113-133 (CSICGDRASGKHYGVYSCEGC) and 149-173 (CREDRNCIIDKRQRNRCQYCRYQKC). The segment at residues 113–185 (CSICGDRASG…CGMKREAVQE (73 aa)) is a DNA-binding region (nuclear receptor). The segment at 185-192 (EERQRAAR) is hinge. The region spanning 203-452 (VQELSIERLL…SYIHDALRNH (250 aa)) is the NR LBD domain.

It belongs to the nuclear hormone receptor family. NR2 subfamily. In terms of assembly, heterodimer of USP and ECR. Only the heterodimer is capable of high-affinity binding to ecdysone.

The protein localises to the nucleus. In terms of biological role, receptor for ecdysone. May be an important modulator of insect metamorphosis. The chain is Protein ultraspiracle homolog (USP) from Manduca sexta (Tobacco hawkmoth).